We begin with the raw amino-acid sequence, 287 residues long: Oxaloacetate decarboxylase (287 aa).

Residue Ser-50 coordinates substrate. Asp-88 provides a ligand contact to Mg(2+). Substrate is bound by residues Arg-159 and His-235.

Belongs to the isocitrate lyase family. Oxaloacetate decarboxylase subfamily. As to quaternary structure, homotetramer; dimer of dimers. It depends on Mg(2+) as a cofactor.

The enzyme catalyses oxaloacetate + H(+) = pyruvate + CO2. Catalyzes the decarboxylation of oxaloacetate into pyruvate. Seems to play a role in maintaining cellular concentrations of bicarbonate and pyruvate. The protein is Oxaloacetate decarboxylase of Pseudomonas aeruginosa (strain LESB58).